The following is a 505-amino-acid chain: GMP synthase [glutamine-hydrolyzing] (505 aa).

Positions 3–190 constitute a Glutamine amidotransferase type-1 domain; sequence KVLVVNFGGQ…LRKIARISDV (188 aa). The Nucleophile role is filled by Cys80. Catalysis depends on residues His164 and Glu166. Residues 191–380 enclose the GMPS ATP-PPase domain; that stretch reads WRPEDQITRI…LGLPEDVVYR (190 aa). Position 218 to 224 (218 to 224) interacts with ATP; the sequence is SGGVDST.

The catalysed reaction is XMP + L-glutamine + ATP + H2O = GMP + L-glutamate + AMP + diphosphate + 2 H(+). It functions in the pathway purine metabolism; GMP biosynthesis; GMP from XMP (L-Gln route): step 1/1. In terms of biological role, catalyzes the synthesis of GMP from XMP. This chain is GMP synthase [glutamine-hydrolyzing], found in Pyrobaculum aerophilum (strain ATCC 51768 / DSM 7523 / JCM 9630 / CIP 104966 / NBRC 100827 / IM2).